The chain runs to 257 residues: Adenosylcobinamide-GDP ribazoletransferase (257 aa).

4 consecutive transmembrane segments (helical) span residues 28-48, 50-70, 110-130, and 199-219; these read FARS…LVAL, LFVP…VYAV, VALA…VEVA, and WPQV…AALV.

It belongs to the CobS family. Mg(2+) is required as a cofactor.

It localises to the cell membrane. It carries out the reaction alpha-ribazole + adenosylcob(III)inamide-GDP = adenosylcob(III)alamin + GMP + H(+). The catalysed reaction is alpha-ribazole 5'-phosphate + adenosylcob(III)inamide-GDP = adenosylcob(III)alamin 5'-phosphate + GMP + H(+). The protein operates within cofactor biosynthesis; adenosylcobalamin biosynthesis; adenosylcobalamin from cob(II)yrinate a,c-diamide: step 7/7. In terms of biological role, joins adenosylcobinamide-GDP and alpha-ribazole to generate adenosylcobalamin (Ado-cobalamin). Also synthesizes adenosylcobalamin 5'-phosphate from adenosylcobinamide-GDP and alpha-ribazole 5'-phosphate. This Halorubrum lacusprofundi (strain ATCC 49239 / DSM 5036 / JCM 8891 / ACAM 34) protein is Adenosylcobinamide-GDP ribazoletransferase.